Consider the following 517-residue polypeptide: Ribose import ATP-binding protein RbsA 2 (517 aa).

ABC transporter domains follow at residues Leu-10–Ile-245 and Asp-255–His-498. Position 42-49 (Gly-42–Ser-49) interacts with ATP. The interval Thr-497–His-517 is disordered.

Belongs to the ABC transporter superfamily. Ribose importer (TC 3.A.1.2.1) family. As to quaternary structure, the complex is composed of an ATP-binding protein (RbsA), two transmembrane proteins (RbsC) and a solute-binding protein (RbsB).

It is found in the cell membrane. The enzyme catalyses D-ribose(out) + ATP + H2O = D-ribose(in) + ADP + phosphate + H(+). Its function is as follows. Part of the ABC transporter complex RbsABC involved in ribose import. Responsible for energy coupling to the transport system. This is Ribose import ATP-binding protein RbsA 2 from Streptomyces coelicolor (strain ATCC BAA-471 / A3(2) / M145).